The following is a 447-amino-acid chain: Signal recognition particle 54 kDa protein (447 aa).

Residues 103-110, 185-189, and 245-248 contribute to the GTP site; these read GVQGSGKT, DTAGR, and TKMD.

Belongs to the GTP-binding SRP family. SRP54 subfamily. In terms of assembly, part of the signal recognition particle protein translocation system, which is composed of SRP and FtsY. Archaeal SRP consists of a 7S RNA molecule of 300 nucleotides and two protein subunits: SRP54 and SRP19.

The protein localises to the cytoplasm. The catalysed reaction is GTP + H2O = GDP + phosphate + H(+). Involved in targeting and insertion of nascent membrane proteins into the cytoplasmic membrane. Binds to the hydrophobic signal sequence of the ribosome-nascent chain (RNC) as it emerges from the ribosomes. The SRP-RNC complex is then targeted to the cytoplasmic membrane where it interacts with the SRP receptor FtsY. This is Signal recognition particle 54 kDa protein from Saccharolobus islandicus (strain M.16.27) (Sulfolobus islandicus).